Consider the following 138-residue polypeptide: Putative pre-16S rRNA nuclease (138 aa).

It belongs to the YqgF nuclease family.

It is found in the cytoplasm. Could be a nuclease involved in processing of the 5'-end of pre-16S rRNA. This chain is Putative pre-16S rRNA nuclease, found in Listeria innocua serovar 6a (strain ATCC BAA-680 / CLIP 11262).